The chain runs to 370 residues: uncharacterized protein (370 aa).

The next 10 membrane-spanning stretches (helical) occupy residues 6–26 (AVVF…CLGN), 49–69 (IGIV…VAPF), 79–99 (SFAN…GEMA), 111–131 (FLGT…LGII), 143–163 (ILIG…CAGF), 167–187 (MIGK…FGLW), 206–226 (MVAI…IVLI), 236–256 (IQTT…TAFI), 307–327 (VAFA…VAGM), and 333–353 (AAMI…AAWM).

The protein belongs to the EutH family.

The protein localises to the cell membrane. This is an uncharacterized protein from Bacillus subtilis (strain 168).